We begin with the raw amino-acid sequence, 229 residues long: Interleukin-22 receptor subunit alpha-2 (229 aa).

A signal peptide spans M1 to E19. Fibronectin type-III domains are found at residues K28 to D127 and P128 to P229. N-linked (GlcNAc...) asparagine glycosylation occurs at N54. Intrachain disulfides connect C76-C84 and C204-C225.

It belongs to the type II cytokine receptor family.

It localises to the secreted. In terms of biological role, receptor for IL22. Binds to IL22, prevents interaction with the functional IL-22R complex and blocks the activity of IL22 (in vitro). May play an important role as an IL22 antagonist in the regulation of inflammatory responses. This Rattus norvegicus (Rat) protein is Interleukin-22 receptor subunit alpha-2 (Il22ra2).